Here is a 231-residue protein sequence, read N- to C-terminus: U1 small nuclear ribonucleoprotein C-1 (231 aa).

The Matrin-type zinc finger occupies 4–36; it reads YYCDYCDTYLTHDSPSVRKQHNAGYKHKANVRT. 3 stretches are compositionally biased toward pro residues: residues 117–127, 134–159, and 167–178; these read APGIPGYPGGP, GAPP…PPGS, and LPRPPTLPPPTS. Residues 117–231 are disordered; that stretch reads APGIPGYPGG…SYAQPSEGNH (115 aa). Positions 181-193 are enriched in low complexity; it reads PGAPIPNSAAPPA. A compositionally biased stretch (pro residues) spans 199–217; sequence PPAPAGPTSGAPPAPPTAP.

The protein belongs to the U1 small nuclear ribonucleoprotein C family. U1 snRNP is composed of the 7 core Sm proteins B/B', D1, D2, D3, E, F and G that assemble in a heptameric protein ring on the Sm site of the small nuclear RNA to form the core snRNP, and at least 3 U1 snRNP-specific proteins U1-70K, U1-A and U1-C. U1-C interacts with U1 snRNA and the 5' splice-site region of the pre-mRNA.

It is found in the nucleus. Its function is as follows. Component of the spliceosomal U1 snRNP, which is essential for recognition of the pre-mRNA 5' splice-site and the subsequent assembly of the spliceosome. U1-C is directly involved in initial 5' splice-site recognition for both constitutive and regulated alternative splicing. The interaction with the 5' splice-site seems to precede base-pairing between the pre-mRNA and the U1 snRNA. Stimulates commitment or early (E) complex formation by stabilizing the base pairing of the 5' end of the U1 snRNA and the 5' splice-site region. The sequence is that of U1 small nuclear ribonucleoprotein C-1 from Sorghum bicolor (Sorghum).